Here is a 130-residue protein sequence, read N- to C-terminus: Histone H2A.6 (130 aa).

Over residues 1–12 (MAGRGKTLGSGG) the composition is skewed to gly residues. The interval 1–23 (MAGRGKTLGSGGAKKATSRSSKA) is disordered.

Belongs to the histone H2A family. As to quaternary structure, the nucleosome is a histone octamer containing two molecules each of H2A, H2B, H3 and H4 assembled in one H3-H4 heterotetramer and two H2A-H2B heterodimers. The octamer wraps approximately 147 bp of DNA. Interacts with VIP1. Not ubiquitinated. As to expression, low level of expression, mainly in dividing tissues: floral buds, margins of newly emerging leaves, expanding leaves and the meristematic zone of root tips. Also expressed in many non-dividing cells of the elongation zone of the root.

The protein resides in the nucleus. Its subcellular location is the chromosome. In terms of biological role, core component of nucleosome. Nucleosomes wrap and compact DNA into chromatin, limiting DNA accessibility to the cellular machineries which require DNA as a template. Histones thereby play a central role in transcription regulation, DNA repair, DNA replication and chromosomal stability. DNA accessibility is regulated via a complex set of post-translational modifications of histones, also called histone code, and nucleosome remodeling. Required for the T-DNA integration step of plant transformation by Agrobacterium. May play an important role in illegitimate recombination. In Arabidopsis thaliana (Mouse-ear cress), this protein is Histone H2A.6 (RAT5).